Reading from the N-terminus, the 63-residue chain is Metallothionein-2 (63 aa).

This sequence belongs to the metallothionein superfamily. Type 6 family.

Its function is as follows. This protein binds cations of several transition elements. This chain is Metallothionein-2 (mtl-2), found in Caenorhabditis elegans.